Reading from the N-terminus, the 206-residue chain is FMN-dependent NADH:quinone oxidoreductase 4 (206 aa).

FMN contacts are provided by residues Ser10 and 136–139 (SSGG).

The protein belongs to the azoreductase type 1 family. Homodimer. FMN is required as a cofactor.

It carries out the reaction 2 a quinone + NADH + H(+) = 2 a 1,4-benzosemiquinone + NAD(+). The catalysed reaction is N,N-dimethyl-1,4-phenylenediamine + anthranilate + 2 NAD(+) = 2-(4-dimethylaminophenyl)diazenylbenzoate + 2 NADH + 2 H(+). In terms of biological role, quinone reductase that provides resistance to thiol-specific stress caused by electrophilic quinones. Functionally, also exhibits azoreductase activity. Catalyzes the reductive cleavage of the azo bond in aromatic azo compounds to the corresponding amines. The chain is FMN-dependent NADH:quinone oxidoreductase 4 from Pseudomonas fluorescens (strain ATCC BAA-477 / NRRL B-23932 / Pf-5).